We begin with the raw amino-acid sequence, 250 residues long: Tumor necrosis factor ligand superfamily member 13 (250 aa).

A propeptide spanning residues 1–104 is cleaved from the precursor; it reads MPASSPFLLA…ENGERSRKRR (104 aa). Disordered regions lie at residues 61–82 and 89–108; these read EVSRLQGTGGPSQNGEGYPWQS and DALEAWENGERSRKRRAVLT. A THD domain is found at 116 to 250; sequence SVLHLVPINA…HGTFLGFVKL (135 aa). The N-linked (GlcNAc...) asparagine glycan is linked to Asn-124. A disulfide bridge connects residues Cys-196 and Cys-211.

The protein belongs to the tumor necrosis factor family. As to quaternary structure, homotrimer. Post-translationally, the precursor is cleaved by furin. In terms of tissue distribution, expressed at high levels in transformed cell lines, cancers of colon, thyroid, lymphoid tissues and specifically expressed in monocytes and macrophages.

Its subcellular location is the secreted. Functionally, cytokine that binds to TNFRSF13B/TACI and to TNFRSF17/BCMA. Plays a role in the regulation of tumor cell growth. May be involved in monocyte/macrophage-mediated immunological processes. The polypeptide is Tumor necrosis factor ligand superfamily member 13 (TNFSF13) (Homo sapiens (Human)).